Here is a 100-residue protein sequence, read N- to C-terminus: Secreted protein of Ly-6 domain 1 (100 aa).

An N-terminal signal peptide occupies residues 1–22 (MAKCLLLLLLVVLSSLLGLPQA). The region spanning 23–100 (LECFQCNRVN…CHDSPLCNKF (78 aa)) is the UPAR/Ly6 domain. 5 disulfide bridges follow: Cys-25/Cys-52, Cys-28/Cys-37, Cys-44/Cys-70, Cys-74/Cys-90, and Cys-91/Cys-97. A glycan (N-linked (GlcNAc...) asparagine) is linked at Asn-60.

Glycosylated. In terms of tissue distribution, expressed in placenta, where it is detected in both fetal tissues (cotyledon and intercotyledon) and maternal tissues (caruncle and intercaruncular endometrium) (at protein level). Expressed in the mesenchyme area of villi in the cotyledon (at protein level). In endometrium, expressed in the luminal epithelium and weakly in the subluminal stroma (at protein level). Detected in trophoblast mononucleate cells (TMCs) (at protein level). Also detected in trophoblast binucleate cells (BNCs). Overall, expression is strongest in fetal tissue and lower in maternal tissue. Not detected in other tissues tested.

The protein resides in the secreted. Its function is as follows. Binds specifically to type I collagen. The sequence is that of Secreted protein of Ly-6 domain 1 from Bos taurus (Bovine).